The following is a 1601-amino-acid chain: PH and SEC7 domain-containing protein (1601 aa).

The mediates regulation of axon branching and microtubule organization stretch occupies residues 1 to 340 (MSEELKVVLR…TGDLILNLSR (340 aa)). In terms of domain architecture, PDZ spans 6 to 88 (KVVLRRSEQH…LVTLELKRDP (83 aa)). Disordered regions lie at residues 113–192 (NIYD…SSTK), 211–322 (TSPT…PAKA), 339–440 (SRTP…SLTN), 459–657 (LEED…SSSG), 737–780 (NSSL…SETA), 872–965 (QQQQ…LLSC), and 1040–1126 (QQLK…SDVE). A compositionally biased stretch (polar residues) spans 118 to 128 (HSSSTNSSPNH). Over residues 166-191 (ASGSTTTTTTATHTHSHSRNSSASST) the composition is skewed to low complexity. The segment covering 283 to 297 (QSLQHSNSYSGSPVT) has biased composition (polar residues). Over residues 300–311 (RFADREPEREPE) the composition is skewed to basic and acidic residues. A Microtubule elimination domain (MTED); Binds tubulin and blocks microtubule polymerization motif is present at residues 323–340 (PRFEAYMMTGDLILNLSR). Over residues 339 to 348 (SRTPQTSNPL) the composition is skewed to polar residues. The segment covering 353–362 (KKIDSLRDSP) has biased composition (basic and acidic residues). 3 stretches are compositionally biased toward low complexity: residues 382 to 399 (SSPT…TSSD), 409 to 424 (QKQQ…QQQQ), and 468 to 487 (QRQQ…YEYY). Residues 488–505 (QNEDELEEQEEVEEEREE) are compositionally biased toward acidic residues. Over residues 510 to 519 (YDITNIETYQ) the composition is skewed to polar residues. Residues 526-557 (DDDDSDRQCLVDDDDDDDAYDDEENDAGDEDY) are compositionally biased toward acidic residues. Polar residues-rich tracts occupy residues 558–567 (STNSLGSGSA) and 617–630 (TSFS…SLST). A compositionally biased stretch (low complexity) spans 640–657 (SVPTSPEPSSLVPESSSG). A compositionally biased stretch (polar residues) spans 737 to 747 (NSSLASNNNEG). 4 stretches are compositionally biased toward low complexity: residues 752–780 (NRSS…SETA), 872–942 (QQQQ…QQQQ), 949–965 (GGQV…LLSC), and 1040–1052 (QQLK…QQQQ). Positions 894-1601 (SSSPQHSAVG…PTNRKEKKKK (708 aa)) are mediates association to the membrane and rescricts the microtubule-inhibiting activity to the cell cortex. Residues 1053-1071 (QRERERDRDRDREQSEHKV) are compositionally biased toward basic and acidic residues. One can recognise an SEC7 domain in the interval 1125–1291 (VESLHSYHYS…KSLYQAIKTK (167 aa)). The PH domain occupies 1332–1445 (VEYKKGYVMR…WVETINYVCA (114 aa)). The tract at residues 1544–1601 (LELQAQQPSPASHEEEADTFPVGTTACTPPTPQSINQKDQQKEQQQQQPTNRKEKKKK) is disordered. The span at 1568 to 1579 (TACTPPTPQSIN) shows a compositional bias: polar residues.

Belongs to the PSD family. As to quaternary structure, interacts (via MTED motif) with tubulin. In terms of tissue distribution, expressed in the head (at protein level).

The protein resides in the cell projection. Its subcellular location is the axon. It is found in the cytoplasm. The protein localises to the cell membrane. It localises to the cell cortex. Its function is as follows. Guanine nucleotide exchange factor for Arf6. Regulates axon growth and branching by inhibiting microtubule polymerisation at the cortex. Together with shot, promotes axonal microtubule bundle integrity. Required for normal ethanol-induced tolerance and preference. Probably by activating Arf6, counteracts ethanol-induced sedation. The sequence is that of PH and SEC7 domain-containing protein from Drosophila melanogaster (Fruit fly).